Reading from the N-terminus, the 160-residue chain is Flavodoxin (160 aa).

Residues 3-153 enclose the Flavodoxin-like domain; sequence ISILYSSKTG…NARIFGERIA (151 aa).

It belongs to the flavodoxin family. Requires FMN as cofactor.

Its function is as follows. Low-potential electron donor to a number of redox enzymes. The polypeptide is Flavodoxin (floX) (Clostridium saccharobutylicum).